The primary structure comprises 194 residues: Molybdenum cofactor guanylyltransferase (194 aa).

Residues 12–14 (LAG), K25, D71, and D101 contribute to the GTP site. D101 is a binding site for Mg(2+).

The protein belongs to the MobA family. Monomer. The cofactor is Mg(2+).

It is found in the cytoplasm. The catalysed reaction is Mo-molybdopterin + GTP + H(+) = Mo-molybdopterin guanine dinucleotide + diphosphate. Transfers a GMP moiety from GTP to Mo-molybdopterin (Mo-MPT) cofactor (Moco or molybdenum cofactor) to form Mo-molybdopterin guanine dinucleotide (Mo-MGD) cofactor. In Salmonella typhimurium (strain LT2 / SGSC1412 / ATCC 700720), this protein is Molybdenum cofactor guanylyltransferase.